We begin with the raw amino-acid sequence, 343 residues long: MTSFLRSDRSRPVAIWLFIVAAMVFAMVVVGGATRLTDSGLSITEWQPIMGALPPMSEQAWRESFELYKQIPQFQLVNPDMTLEGYKEIFWWEWAHRLLGRTVGAVYAIPLIVFLIRRDIPRRLIWRCAAMLGLGGLQGLVGWWMVSSGLSERVSVAPERLMTHLGLALALFVLLIWTALDAWNGSPRVEERSPWRGWALAFLGAVFFQSLLGALVAGNDAGFVYNDWPLMNGRFFPGDYGGAGLWGTLAHSQAAVQFNHRIFAYALLLAAVVLVVLARRDRLLVGQGKSLATAVAAVVFLQAALGVWTLMAAVPISLGVLHQAGAAVLLAVATAFAWRVRRP.

8 helical membrane-spanning segments follow: residues valine 13 to alanine 33, histidine 96 to isoleucine 116, alanine 130 to leucine 150, leucine 161 to aspartate 181, glycine 197 to alanine 217, phenylalanine 258 to alanine 278, alanine 294 to valine 314, and leucine 318 to tryptophan 338. Histidine 260 provides a ligand contact to heme. Histidine 322 serves as a coordination point for heme.

Belongs to the COX15/CtaA family. Type 2 subfamily. Interacts with CtaB. The cofactor is heme b.

The protein resides in the cell membrane. It carries out the reaction Fe(II)-heme o + 2 A + H2O = Fe(II)-heme a + 2 AH2. It functions in the pathway porphyrin-containing compound metabolism; heme A biosynthesis; heme A from heme O: step 1/1. Functionally, catalyzes the conversion of heme O to heme A by two successive hydroxylations of the methyl group at C8. The first hydroxylation forms heme I, the second hydroxylation results in an unstable dihydroxymethyl group, which spontaneously dehydrates, resulting in the formyl group of heme A. This Caulobacter vibrioides (strain ATCC 19089 / CIP 103742 / CB 15) (Caulobacter crescentus) protein is Heme A synthase.